Consider the following 96-residue polypeptide: Prokineticin Bv8 (96 aa).

A signal peptide spans 1–19 (MKCFAQIVVLLLVIAFSHG). Residues 20 to 24 (AVITG) form a may be important for binding to prokineticin receptor 2 region. Intrachain disulfides connect C26–C38, C32–C50, C37–C78, C60–C86, and C80–C95.

As to expression, expressed by the skin glands.

It localises to the secreted. Its function is as follows. Potent agonist for both PKR1/PROKR1 and PKR2/PROKR2, and inducer of a potent and long-lasting hyperalgesia. Shows an EC(50) of 0.264 nM, when tested on neuroblastoma cells (SH-SY5Y) which endogenously express mainly PKR2/PROKR2. Also potentiates capsaicin-induced TRPV1 current, when tested on DRG neurons. Induces a biphasic hyperalgesia to tactile and thermal stimuli after systemic injection of this protein into rat. The initial phase of hyperalgesia is caused by a local action on nociceptors, because intraplantar injection of this protein causes a strong and localized hyperalgesia with a similar time course to that of the initial phase of hyperalgesia seen with systemic injection. The secondary phase of hyperalgesia is not seen with local intraplantar injection and is therefore probably attributable to a central action of this protein. At subnanomolar concentrations, this protein both induces potent chemotaxis of macrophages and stimulates LPS-induced production of the pro-inflammatory cytokines IL-1 and IL-12. In vivo, this protein potently stimulates the contraction of the guinea-pig gastrointestinal (GI) smooth muscle (at nanomolar concentration). This is Prokineticin Bv8 from Bombina variegata (Yellow-bellied toad).